We begin with the raw amino-acid sequence, 270 residues long: Type II restriction enzyme CeqI (270 aa).

It carries out the reaction Endonucleolytic cleavage of DNA to give specific double-stranded fragments with terminal 5'-phosphates.. In terms of biological role, a P subtype restriction enzyme that recognizes the double-stranded sequence 5'-GATATC-3' and cleaves after T-3. The sequence is that of Type II restriction enzyme CeqI (ceqIR) from Rhodococcus hoagii (Corynebacterium equii).